The primary structure comprises 201 residues: Guanylate kinase (201 aa).

The region spanning 10-195 (GKIIILSGPS…CVEEVKNILK (186 aa)) is the Guanylate kinase-like domain. 17-24 (GPSGVGKG) is an ATP binding site.

Belongs to the guanylate kinase family.

The protein resides in the cytoplasm. The enzyme catalyses GMP + ATP = GDP + ADP. Essential for recycling GMP and indirectly, cGMP. This is Guanylate kinase from Mycoplasma mobile (strain ATCC 43663 / 163K / NCTC 11711) (Mesomycoplasma mobile).